A 406-amino-acid chain; its full sequence is Leu/Ile/Val-binding protein homolog 5 (406 aa).

Positions 1-29 (MIGTRLPAWTRVLACGVAGLSLMTISAKA) are cleaved as a signal peptide.

The protein belongs to the leucine-binding protein family.

Functionally, component of an amino-acid transport system. The protein is Leu/Ile/Val-binding protein homolog 5 of Brucella abortus (strain 2308).